The chain runs to 108 residues: Putative septation protein SpoVG (108 aa).

The protein belongs to the SpoVG family.

Could be involved in septation. In Bdellovibrio bacteriovorus (strain ATCC 15356 / DSM 50701 / NCIMB 9529 / HD100), this protein is Putative septation protein SpoVG.